The primary structure comprises 646 residues: Peptidylprolyl isomerase domain and WD repeat-containing protein 1 (646 aa).

Residues 1–30 (MAAESGSDFQQRRRRRRDPEEPEKTELSER) are disordered. An N-acetylalanine modification is found at Ala2. The segment covering 17–30 (RDPEEPEKTELSER) has biased composition (basic and acidic residues). WD repeat units follow at residues 88 to 126 (MHRD…IEFV), 131 to 170 (SHLG…MINM), 221 to 260 (LHTS…YKFP), and 278 to 319 (KCKA…RVFD). Residues 455 to 478 (EPEDTKSADSDRDVFNEKPSKEEV) are compositionally biased toward basic and acidic residues. Residues 455 to 490 (EPEDTKSADSDRDVFNEKPSKEEVMAATQAEGPKRV) are disordered. Residues 490–645 (VSDSAIIHTS…EDVSIINITV (156 aa)) form the PPIase cyclophilin-type domain.

The protein belongs to the cyclophilin-type PPIase family. PPIL1 subfamily. In terms of assembly, identified in the spliceosome C complex.

It localises to the nucleus. The catalysed reaction is [protein]-peptidylproline (omega=180) = [protein]-peptidylproline (omega=0). Inhibited by cyclosporin A (CsA). Functionally, PPIase that catalyzes the cis-trans isomerization of proline imidic peptide bonds in oligopeptides and may therefore assist protein folding. May be involved in pre-mRNA splicing. The chain is Peptidylprolyl isomerase domain and WD repeat-containing protein 1 from Pongo abelii (Sumatran orangutan).